The chain runs to 336 residues: Pyridoxal 5'-phosphate synthase subunit PdxS (336 aa).

Aspartate 33 contacts D-ribose 5-phosphate. Catalysis depends on lysine 90, which acts as the Schiff-base intermediate with D-ribose 5-phosphate. Residue glycine 162 coordinates D-ribose 5-phosphate. A D-glyceraldehyde 3-phosphate-binding site is contributed by arginine 174. D-ribose 5-phosphate is bound by residues glycine 260 and glycine 281–serine 282.

This sequence belongs to the PdxS/SNZ family. As to quaternary structure, in the presence of PdxT, forms a dodecamer of heterodimers.

It catalyses the reaction aldehydo-D-ribose 5-phosphate + D-glyceraldehyde 3-phosphate + L-glutamine = pyridoxal 5'-phosphate + L-glutamate + phosphate + 3 H2O + H(+). It functions in the pathway cofactor biosynthesis; pyridoxal 5'-phosphate biosynthesis. Functionally, catalyzes the formation of pyridoxal 5'-phosphate from ribose 5-phosphate (RBP), glyceraldehyde 3-phosphate (G3P) and ammonia. The ammonia is provided by the PdxT subunit. Can also use ribulose 5-phosphate and dihydroxyacetone phosphate as substrates, resulting from enzyme-catalyzed isomerization of RBP and G3P, respectively. The protein is Pyridoxal 5'-phosphate synthase subunit PdxS of Picrophilus torridus (strain ATCC 700027 / DSM 9790 / JCM 10055 / NBRC 100828 / KAW 2/3).